Here is a 28-residue protein sequence, read N- to C-terminus: MNFQENVTLAMALFTILTSIYFFNKAQQ.

A helical membrane pass occupies residues valine 7–asparagine 24.

The protein resides in the membrane. The polypeptide is Small integral membrane protein 47 (Homo sapiens (Human)).